The primary structure comprises 1043 residues: Unconventional myosin-Ia (1043 aa).

In terms of domain architecture, Myosin motor spans 8–694 (VGVEDLVLLE…TLFYLEEQRR (687 aa)). ATP is bound at residue 101–108 (GESGAGKT). Residues 571–593 (VTTLMKNLYSKNPNYIRCIKPNE) form an actin-binding region. IQ domains are found at residues 697–719 (LQQLATLIQKTYRGWRCRTHYQL), 720–742 (MRKSQIVISSWFRGNMQKKHYRK), and 743–772 (MKASALLIQAFVRGWKARKNYRKYFRSGAA). Residues 858–1042 (KASYPQSVPI…KGSRCLEVTV (185 aa)) form the TH1 domain.

The protein belongs to the TRAFAC class myosin-kinesin ATPase superfamily. Myosin family. Phosphorylated by ALPK1.

Involved in directing the movement of organelles along actin filaments. The protein is Unconventional myosin-Ia (MYO1A) of Bos taurus (Bovine).